The chain runs to 532 residues: Fatty-acid amide hydrolase 2 (532 aa).

A helical transmembrane segment spans residues 11 to 31; the sequence is LFLLRALGFLIGLVGRAALVL. Active-site charge relay system residues include Lys-131 and Ser-206. Ser-230 functions as the Acyl-ester intermediate in the catalytic mechanism.

This sequence belongs to the amidase family. Homodimer. Expressed in kidney, liver, lung, prostate, heart and ovary.

The protein resides in the membrane. It localises to the lipid droplet. It catalyses the reaction N-(5Z,8Z,11Z,14Z-eicosatetraenoyl)-ethanolamine + H2O = ethanolamine + (5Z,8Z,11Z,14Z)-eicosatetraenoate. It carries out the reaction (9Z)-octadecenamide + H2O = (9Z)-octadecenoate + NH4(+). The catalysed reaction is N-(9Z-octadecenoyl) ethanolamine + H2O = ethanolamine + (9Z)-octadecenoate. The enzyme catalyses N-hexadecanoylethanolamine + H2O = ethanolamine + hexadecanoate. Its activity is regulated as follows. Inhibited by O-aryl carbamates and alpha-keto heterocytes. Functionally, catalyzes the hydrolysis of endogenous amidated lipids like the sleep-inducing lipid oleamide ((9Z)-octadecenamide), the endocannabinoid anandamide (N-(5Z,8Z,11Z,14Z-eicosatetraenoyl)-ethanolamine), as well as other fatty amides, to their corresponding fatty acids, thereby regulating the signaling functions of these molecules. Hydrolyzes monounsaturated substrate anandamide preferentially as compared to polyunsaturated substrates. The chain is Fatty-acid amide hydrolase 2 (FAAH2) from Homo sapiens (Human).